A 56-amino-acid chain; its full sequence is Ovomucoid (56 aa).

The region spanning 6 to 56 (VDCSEYPKPECTAEERPICGSDNKTYGNKCNFCNAVVESNGTLTLRNFGKC) is the Kazal-like domain. 3 disulfides stabilise this stretch: cysteine 8-cysteine 38, cysteine 16-cysteine 35, and cysteine 24-cysteine 56. Residue asparagine 45 is glycosylated (N-linked (GlcNAc...) asparagine).

The protein resides in the secreted. The protein is Ovomucoid of Bambusicola thoracicus (Chinese bamboo-partridge).